The chain runs to 142 residues: Pro-vaccinia growth factor (142 aa).

An N-terminal signal peptide occupies residues 1–18 (MSMKYLMLLFAAMIIRSF). Residues 19-100 (ADSGNAIETT…SENPNTTTSY (82 aa)) lie on the Extracellular side of the membrane. N-linked (GlcNAc...) asparagine; by host glycosylation is present at N34. The 41-residue stretch at 41–81 (AIRLCGPEGDGYCLHGDCIHARDIDGMYCRCSHGYTGIRCQ) folds into the EGF-like domain. 3 cysteine pairs are disulfide-bonded: C45–C58, C53–C69, and C71–C80. N95 carries N-linked (GlcNAc...) asparagine; by host glycosylation. Residues 101–121 (IPSPGIMLVLVGIIIIITCCL) traverse the membrane as a helical segment. The Cytoplasmic portion of the chain corresponds to 122–142 (LSVYRFTRRTNKLPLQDMVVP).

It belongs to the orthopoxvirus OPG019 family. As to quaternary structure, vaccinia growth factor interacts with host EGFR and promotes EGFR dimerization.

It is found in the host membrane. The protein resides in the secreted. Its function is as follows. Stimulates cellular proliferation (hyperplasia)and mobility around infected cells to promote rapid and efficient spread of infection. This effect is beneficial for virus replication in vivo, because poxviruses replicate possibly better in proliferating cells than in quiescent cells. Acts by binding host EGFR, inducing its dimerization, autophosphorylation and leading to activation of several cellular pathways regulating cell proliferation or cell survival. The activation by host EGFR of mitogen activated protein kinases (MAPK) and extracellular-signal regulated kinases (ERK) are essential for the positive effect of vaccinia growth factor on poxvirus virulence in vivo. This is Pro-vaccinia growth factor (OPG019) from Vaccinia virus (strain Copenhagen) (VACV).